We begin with the raw amino-acid sequence, 208 residues long: LexA repressor (208 aa).

Positions 29–49 (IREIGDSLNINSTSTVHNNIL) form a DNA-binding region, H-T-H motif. Active-site for autocatalytic cleavage activity residues include Ser131 and Lys168.

It belongs to the peptidase S24 family. Homodimer.

The catalysed reaction is Hydrolysis of Ala-|-Gly bond in repressor LexA.. Represses a number of genes involved in the response to DNA damage (SOS response), including recA and lexA. In the presence of single-stranded DNA, RecA interacts with LexA causing an autocatalytic cleavage which disrupts the DNA-binding part of LexA, leading to derepression of the SOS regulon and eventually DNA repair. This Finegoldia magna (strain ATCC 29328 / DSM 20472 / WAL 2508) (Peptostreptococcus magnus) protein is LexA repressor.